Consider the following 2096-residue polypeptide: HEAT repeat-containing protein 1 homolog (2096 aa).

Residues 2058 to 2096 (TVPFIAELLEDEHQRVEKNTRTGVQELETILGESVQKYL) form an HEAT repeat.

It belongs to the HEATR1/UTP10 family. Part of the small subunit (SSU) processome, composed of more than 70 proteins and the RNA chaperone small nucleolar RNA (snoRNA) U3. Interacts with MYC; the interaction is required for localization of MYC to the nucleolus.

The protein localises to the nucleus. It is found in the nucleolus. Ribosome biogenesis factor; required for recruitment of Myc to nucleoli. Involved in nucleolar processing of pre-18S ribosomal RNA. Required for optimal pre-ribosomal RNA transcription by RNA polymerase I. Part of the small subunit (SSU) processome, first precursor of the small eukaryotic ribosomal subunit. During the assembly of the SSU processome in the nucleolus, many ribosome biogenesis factors, an RNA chaperone and ribosomal proteins associate with the nascent pre-rRNA and work in concert to generate RNA folding, modifications, rearrangements and cleavage as well as targeted degradation of pre-ribosomal RNA by the RNA exosome. Involved in neuronal-lineage cell proliferation during larval development. The sequence is that of HEAT repeat-containing protein 1 homolog from Drosophila melanogaster (Fruit fly).